We begin with the raw amino-acid sequence, 720 residues long: Inactive serine protease PAMR1 (720 aa).

Residues 1 to 21 (MELGWWPQLGLAFLQLLLISS) form the signal peptide. Intrachain disulfides connect cysteine 128–cysteine 150, cysteine 177–cysteine 199, cysteine 239–cysteine 250, cysteine 244–cysteine 260, cysteine 262–cysteine 271, cysteine 280–cysteine 329, cysteine 315–cysteine 342, and cysteine 414–cysteine 442. One can recognise a CUB domain in the interval 128 to 236 (CGQVLRVPKG…DGFHAIFEEI (109 aa)). The EGF-like domain occupies 235–272 (EITACSSSPCFHDGTCLLDSTGSYKCACLAGYTGKHCE). 2 consecutive Sushi domains span residues 278–344 (RNCS…ICIK) and 387–444 (APTK…SCIP). In terms of domain architecture, Peptidase S1 spans 445–720 (ICGKTENVSA…FKDWIERNMK (276 aa)). N-linked (GlcNAc...) asparagine glycosylation occurs at asparagine 451. 3 disulfide bridges follow: cysteine 489/cysteine 505, cysteine 630/cysteine 649, and cysteine 661/cysteine 697.

The protein belongs to the peptidase S1 family.

Its subcellular location is the secreted. Functionally, may play a role in regeneration of skeletal muscle. The polypeptide is Inactive serine protease PAMR1 (PAMR1) (Bos taurus (Bovine)).